A 190-amino-acid polypeptide reads, in one-letter code: dCTP deaminase, dUMP-forming (190 aa).

DCTP is bound by residues 101–106 (KSSLGR), D119, 127–129 (TLE), Q148, Y162, K170, and Q174. E129 acts as the Proton donor/acceptor in catalysis. Residues 160-190 (HPYGSSRAGSKYQGQRGPTPSRSYQNFIRST) are disordered. Residues 171–190 (YQGQRGPTPSRSYQNFIRST) are compositionally biased toward polar residues.

The protein belongs to the dCTP deaminase family. As to quaternary structure, homotrimer.

The enzyme catalyses dCTP + 2 H2O = dUMP + NH4(+) + diphosphate. It participates in pyrimidine metabolism; dUMP biosynthesis; dUMP from dCTP: step 1/1. Functionally, bifunctional enzyme that catalyzes both the deamination of dCTP to dUTP and the hydrolysis of dUTP to dUMP without releasing the toxic dUTP intermediate. The chain is dCTP deaminase, dUMP-forming from Mycobacterium tuberculosis (strain ATCC 25177 / H37Ra).